The sequence spans 145 residues: D-aminoacyl-tRNA deacylase (145 aa).

The Gly-cisPro motif, important for rejection of L-amino acids signature appears at 137 to 138; it reads GP.

Belongs to the DTD family. As to quaternary structure, homodimer.

The protein resides in the cytoplasm. It carries out the reaction glycyl-tRNA(Ala) + H2O = tRNA(Ala) + glycine + H(+). It catalyses the reaction a D-aminoacyl-tRNA + H2O = a tRNA + a D-alpha-amino acid + H(+). Functionally, an aminoacyl-tRNA editing enzyme that deacylates mischarged D-aminoacyl-tRNAs. Also deacylates mischarged glycyl-tRNA(Ala), protecting cells against glycine mischarging by AlaRS. Acts via tRNA-based rather than protein-based catalysis; rejects L-amino acids rather than detecting D-amino acids in the active site. By recycling D-aminoacyl-tRNA to D-amino acids and free tRNA molecules, this enzyme counteracts the toxicity associated with the formation of D-aminoacyl-tRNA entities in vivo and helps enforce protein L-homochirality. This chain is D-aminoacyl-tRNA deacylase, found in Shewanella baltica (strain OS223).